The chain runs to 255 residues: 4-hydroxy-tetrahydrodipicolinate reductase (255 aa).

NAD(+) is bound by residues 9–14, 89–91, and 115–118; these read GFKGKM, GTT, and APNF. His145 functions as the Proton donor/acceptor in the catalytic mechanism. Residue His146 coordinates (S)-2,3,4,5-tetrahydrodipicolinate. Lys149 acts as the Proton donor in catalysis. 155-156 lines the (S)-2,3,4,5-tetrahydrodipicolinate pocket; sequence GT.

The protein belongs to the DapB family.

Its subcellular location is the cytoplasm. The catalysed reaction is (S)-2,3,4,5-tetrahydrodipicolinate + NAD(+) + H2O = (2S,4S)-4-hydroxy-2,3,4,5-tetrahydrodipicolinate + NADH + H(+). It catalyses the reaction (S)-2,3,4,5-tetrahydrodipicolinate + NADP(+) + H2O = (2S,4S)-4-hydroxy-2,3,4,5-tetrahydrodipicolinate + NADPH + H(+). It participates in amino-acid biosynthesis; L-lysine biosynthesis via DAP pathway; (S)-tetrahydrodipicolinate from L-aspartate: step 4/4. Its function is as follows. Catalyzes the conversion of 4-hydroxy-tetrahydrodipicolinate (HTPA) to tetrahydrodipicolinate. The sequence is that of 4-hydroxy-tetrahydrodipicolinate reductase from Streptococcus gordonii (strain Challis / ATCC 35105 / BCRC 15272 / CH1 / DL1 / V288).